We begin with the raw amino-acid sequence, 359 residues long: tRNA N6-adenosine threonylcarbamoyltransferase (359 aa).

Residues His121 and His125 each contribute to the Fe cation site. Substrate-binding positions include 143–147 (LVSGG), Asp176, Gly189, and Asn286. Asp311 serves as a coordination point for Fe cation.

This sequence belongs to the KAE1 / TsaD family. Fe(2+) serves as cofactor.

It localises to the cytoplasm. The catalysed reaction is L-threonylcarbamoyladenylate + adenosine(37) in tRNA = N(6)-L-threonylcarbamoyladenosine(37) in tRNA + AMP + H(+). In terms of biological role, required for the formation of a threonylcarbamoyl group on adenosine at position 37 (t(6)A37) in tRNAs that read codons beginning with adenine. Is involved in the transfer of the threonylcarbamoyl moiety of threonylcarbamoyl-AMP (TC-AMP) to the N6 group of A37, together with TsaE and TsaB. TsaD likely plays a direct catalytic role in this reaction. The protein is tRNA N6-adenosine threonylcarbamoyltransferase of Jannaschia sp. (strain CCS1).